We begin with the raw amino-acid sequence, 170 residues long: UPF0260 protein Rpal_2074 (170 aa).

This sequence belongs to the UPF0260 family.

This is UPF0260 protein Rpal_2074 from Rhodopseudomonas palustris (strain TIE-1).